A 174-amino-acid polypeptide reads, in one-letter code: Gamma-crystallin M3 (174 aa).

Beta/gamma crystallin 'Greek key' domains follow at residues 2 to 40 (GKII…RVES) and 41 to 82 (GCFV…RMVP). Residues 83–87 (QYRGP) are connecting peptide. 2 Beta/gamma crystallin 'Greek key' domains span residues 88–128 (YRMR…HVMD) and 129–171 (GHWL…RRIM).

The protein belongs to the beta/gamma-crystallin family. In terms of assembly, monomer.

Functionally, crystallins are the dominant structural components of the vertebrate eye lens. This chain is Gamma-crystallin M3, found in Cyprinus carpio (Common carp).